Consider the following 195-residue polypeptide: Ferredoxin-2, mitochondrial (195 aa).

Residues 1–61 constitute a mitochondrion transit peptide; it reads MAAAAAVRAG…RRLRTSIGVC (61 aa). One can recognise a 2Fe-2S ferredoxin-type domain in the interval 81–182; it reads NVVYIDRSGR…GMELTLPKVT (102 aa). Cys117, Cys123, Cys126, and Cys163 together coordinate [2Fe-2S] cluster.

This sequence belongs to the adrenodoxin/putidaredoxin family. In terms of assembly, component of the mitochondrial core iron-sulfur cluster (ISC) complex composed of NFS1, LYRM4, NDUFAB1, ISCU, FXN, and FDX2; this complex is a heterohexamer containing two copies of each monomer. Form a heterodimer complex with NFS1. [2Fe-2S] cluster serves as cofactor.

It localises to the mitochondrion. It is found in the mitochondrion matrix. Electron donor, of the core iron-sulfur cluster (ISC) assembly complex, that acts to reduce the persulfide into sulfide during [2Fe-2S] clusters assembly on the scaffolding protein ISCU. The core iron-sulfur cluster (ISC) assembly complex is involved in the de novo synthesis of a [2Fe-2S] cluster, the first step of the mitochondrial iron-sulfur protein biogenesis. This process is initiated by the cysteine desulfurase complex (NFS1:LYRM4:NDUFAB1) that produces persulfide which is delivered on the scaffold protein ISCU in a FXN-dependent manner. Then this complex is stabilized by FDX2 which provides reducing equivalents to accomplish the [2Fe-2S] cluster assembly. Finally, the [2Fe-2S] cluster is transferred from ISCU to chaperone proteins, including HSCB, HSPA9 and GLRX5. Essential for coenzyme Q biosynthesis: together with FDXR, transfers the electrons required for the hydroxylation reaction performed by COQ6. In Danio rerio (Zebrafish), this protein is Ferredoxin-2, mitochondrial.